Reading from the N-terminus, the 236-residue chain is Chloride intracellular channel protein 3 (236 aa).

The segment at 1–88 (MAETKLQLFV…EDFLEETLGP (88 aa)) is required for insertion into the membrane. Positions 12-90 (ASEDGESVGH…FLEETLGPPD (79 aa)) constitute a GST N-terminal domain. The G-site signature appears at 22 to 25 (CPSC). The cysteines at positions 22 and 25 are disulfide-linked. The helical transmembrane segment at 24 to 44 (SCQRLFMVLLLKGVPFTLTTV) threads the bilayer. Phosphoserine occurs at positions 49 and 159. The GST C-terminal domain maps to 68-235 (DSDAKTDTLQ…LAAYRPAVHP (168 aa)).

Belongs to the chloride channel CLIC family. In terms of assembly, associated with the C-terminal of MAPK15. As to expression, detected in placenta (at protein level). Widely expressed. High expression is found in placenta followed by lung and heart. Low expression in skeletal muscle, kidney and pancreas.

It localises to the nucleus. The protein localises to the membrane. It is found in the cell membrane. Its subcellular location is the cytoplasm. The protein resides in the secreted. It localises to the extracellular space. The protein localises to the extracellular matrix. The catalysed reaction is chloride(in) = chloride(out). Its activity is regulated as follows. Inhibited by rapamycin, amphotericin B and IAA-94. In the soluble state, catalyzes glutaredoxin-like thiol disulfide exchange reactions with reduced glutathione as electron donor. Reduced in a glutathione-dependent way and secreted into the extracellular matrix where it activates TGM2 and promotes blood vessel growth during tissue remodeling as occurs in tumorigenesis. Can reduce specific cysteines in TGM2 and regulate cofactor binding. Can insert into membranes and form outwardly rectifying chloride ion channels. May participate in cellular growth control. This Homo sapiens (Human) protein is Chloride intracellular channel protein 3.